A 536-amino-acid chain; its full sequence is Protein scd2/ral3 (536 aa).

The 63-residue stretch at 24–86 (PPRKVIRALY…PVSHFEEIGK (63 aa)) folds into the SH3 1 domain. The disordered stretch occupies residues 88–115 (VKSERDSDGSGQISFTDLTTNSSTTRSS). A compositionally biased stretch (low complexity) spans 101–115 (SFTDLTTNSSTTRSS). Positions 123–185 (SQPLFGIVQF…PLSFIQLRDL (63 aa)) constitute an SH3 2 domain. The PX domain occupies 293 to 413 (SSEPTVVAAM…LFFLPLDGDV (121 aa)). The region spanning 459 to 533 (TCKVKVRLGD…ESGVLLFAER (75 aa)) is the PB1 domain.

As to quaternary structure, scd1, scd2, cdc42, and ras1, in its GTP-bound state, act cooperatively to form a protein complex.

In terms of biological role, required for mating and morphogenesis. Interacts directly with scd1 and with cdc42. May bridge and facilitate scd1 and cdc42 interactions. The protein is Protein scd2/ral3 (scd2) of Schizosaccharomyces pombe (strain 972 / ATCC 24843) (Fission yeast).